The chain runs to 238 residues: Thiamine import ATP-binding protein ThiQ (238 aa).

The ABC transporter domain occupies 2-230 (LALDKVRYEY…HPHPELAQFV (229 aa)). ATP is bound at residue 32–39 (GPSGAGKS).

Belongs to the ABC transporter superfamily. Thiamine importer (TC 3.A.1.19.1) family. In terms of assembly, the complex is composed of two ATP-binding proteins (ThiQ), two transmembrane proteins (ThiP) and a solute-binding protein (ThiB).

The protein resides in the cell inner membrane. It catalyses the reaction thiamine(out) + ATP + H2O = thiamine(in) + ADP + phosphate + H(+). Its function is as follows. Part of the ABC transporter complex ThiBPQ involved in thiamine import. Responsible for energy coupling to the transport system. This is Thiamine import ATP-binding protein ThiQ from Vibrio cholerae serotype O1 (strain ATCC 39315 / El Tor Inaba N16961).